The sequence spans 306 residues: Probable pinoresinol-lariciresinol reductase 3 (306 aa).

NADP(+) is bound by residues Gly14–Gly20, Arg39, and Lys46. Residue Lys131 is the Proton acceptor of the active site. Arg135 is a binding site for NADP(+).

Belongs to the NmrA-type oxidoreductase family. Isoflavone reductase subfamily. Dimer.

Its function is as follows. Probable reductase that might be involved in the reduction of lariciresinol into secoisolariciresinol. In most plant species, a single enzyme is able to reduce both pinoresinol and lariciresinol efficiently while in Arabidopsis, PRR1 and PRR2 show a strict substrate selectivity for pinoresinol. This Arabidopsis thaliana (Mouse-ear cress) protein is Probable pinoresinol-lariciresinol reductase 3 (PLR3).